We begin with the raw amino-acid sequence, 105 residues long: Nitrogenase-stabilizing/protective protein NifW 1 (105 aa).

Belongs to the NifW family. As to quaternary structure, homotrimer; associates with NifD.

May protect the nitrogenase Fe-Mo protein from oxidative damage. The protein is Nitrogenase-stabilizing/protective protein NifW 1 of Trichormus variabilis (strain ATCC 29413 / PCC 7937) (Anabaena variabilis).